An 816-amino-acid polypeptide reads, in one-letter code: MGETAGERALSRVHSVRERIGHSLSAHTNELVAVFSRLVNQGKGMLQPHQITAEYNAAIPEAEREKLKNTPFEDLLRGAQEAIVIPPWVALAIRPRPGVWEYVRVNVSELGVEELSVLRYLQFKEQLANGSTDNNFVLELDFGPFNASFPRPSLSKSIGNGVQFLNRHLSSKLFHDKESMYPLLNFLRAHNYKGMTMMLNDRIRSLGTLQGALRKAETHLSGLPADTPYTEFHHRFQELGLEKGWGDCAQRASETIHLLLDLLEAPDPSSLEKFLGTIPMVLNVVILSPHGYFAQANVLGYPDTGGQVVYILDQVRAMENEMLLRIKQQGLDITPKILIVTRMLPDAHGTTCGQRLEKVLGTEHTHILRVPFKTEDGIVRKWISRFEVWPYLEAYTDDVAHEIAGELQANPDLIIGNYSDGNLVACLLAHKLGVTHCTIAHALEKTKYPNSDLYWKKFEDHYHFSCQFTADLIAMNHADFIITSTFQEIAGNKDTVGQYESHMAFTMPGLYRVVHGIDVFDPKFNIVSPGADMSIYFPYTEQQKRLTSLHTEIEELLFSDVENAEHKFVLKDKKKPIIFSMARLDRVKNMTGLVEMYGRNPRLQELVNLVVVCGDHGKVSKDKEEQVEFKKMFDLIEKYNLSGHIRWISAQMNRVRNGELYRYICDMKGAFVQPAFYEAFGLTVIEAMTCGLPTFATAYGGPAEIIVNGVSGYHIDPYQNDKASALLVGFFGKCQEDPSHWNKISQGGLQRIEEKYTWKLYSERLMTLSGVYGFWKYVSNLDRRETRRYLEMLYALKYRKMAATVPLAVEGETSGE.

The GT-B glycosyltransferase stretch occupies residues 280 to 757 (MVLNVVILSP…GLQRIEEKYT (478 aa)).

The protein belongs to the glycosyltransferase 1 family. Plant sucrose synthase subfamily. As to quaternary structure, forms homotetramers and heterotetramers with SS1, all three possible heterotetramers are formed. In terms of tissue distribution, abundant in developing endosperm, low in aleurone, and undetected in coleoptiles and roots. Also detected in crude extracts of anthers and in immature embryos.

It carries out the reaction an NDP-alpha-D-glucose + D-fructose = a ribonucleoside 5'-diphosphate + sucrose + H(+). Sucrose-cleaving enzyme that provides UDP-glucose and fructose for various metabolic pathways. The chain is Sucrose synthase 2 (SS2) from Hordeum vulgare (Barley).